A 129-amino-acid polypeptide reads, in one-letter code: MRHRKSGRQLNRNSSHRQAMFRNMAGSLVRHEIIKTTLPKAKELRRVVEPLITLAKTDSVANRRLAFARTRDNEIVAKLFNELGPRFASRAGGYTRILKCGFRAGDNAPMAYIELVDRAESQAEVATAE.

Belongs to the bacterial ribosomal protein bL17 family. As to quaternary structure, part of the 50S ribosomal subunit. Contacts protein L32.

This chain is Large ribosomal subunit protein bL17, found in Serratia proteamaculans (strain 568).